A 284-amino-acid chain; its full sequence is UPF0294 protein VV2535 (284 aa).

This sequence belongs to the UPF0294 family.

The protein resides in the cytoplasm. This Vibrio vulnificus (strain YJ016) protein is UPF0294 protein VV2535.